We begin with the raw amino-acid sequence, 141 residues long: Putative inactive deoxyuridine 5'-triphosphate nucleotidohydrolase-like protein FLJ16323 (141 aa).

It belongs to the dUTPase family.

The chain is Putative inactive deoxyuridine 5'-triphosphate nucleotidohydrolase-like protein FLJ16323 from Homo sapiens (Human).